The sequence spans 307 residues: Leucine-rich repeat-containing protein 59 (307 aa).

Met-1 carries the post-translational modification N-acetylmethionine. Thr-2 is subject to N-acetylthreonine; in Leucine-rich repeat-containing protein 59, N-terminally processed. Residues Thr-2 to Ser-244 lie on the Cytoplasmic side of the membrane. LRR repeat units follow at residues Asn-10–Pro-31, Lys-40–Thr-62, His-63–Leu-84, Asn-86–Leu-107, and Asn-109–Ala-128. A phosphoserine mark is found at Ser-23 and Ser-25. Residue Lys-73 is modified to N6-succinyllysine. Lys-135 bears the N6-acetyllysine mark. Positions Met-148 to Lys-216 form a coiled coil. Residues Ala-150 to Asn-242 are disordered. The segment covering Asp-154–Thr-221 has biased composition (basic and acidic residues). Basic residues predominate over residues Ser-229–Asn-242. A helical membrane pass occupies residues Trp-245–Val-265. At Cys-266–Gln-307 the chain is on the lumenal side.

Can form homodimers. Interacts with SGO1. Interacts with FGF1.

Its subcellular location is the microsome membrane. The protein localises to the endoplasmic reticulum membrane. The protein resides in the nucleus envelope. In terms of biological role, required for nuclear import of FGF1, but not that of FGF2. Might regulate nuclear import of exogenous FGF1 by facilitating interaction with the nuclear import machinery and by transporting cytosolic FGF1 to, and possibly through, the nuclear pores. This chain is Leucine-rich repeat-containing protein 59 (Lrrc59), found in Rattus norvegicus (Rat).